A 278-amino-acid chain; its full sequence is Rhomboid protease GlpG (278 aa).

6 helical membrane-spanning segments follow: residues 94–114, 143–163, 175–195, 196–216, 224–241, and 245–267; these read AGPLTLSVMVLCIAIYILMLI, AFLHFSLLHILFNLMWWWYLG, LLVLTIVSAVFSGWGQSLFSG, ANFGGLSGVVYALMGYVWLTG, ISLPRGLMAFSVLWLIAG, and ILGLSIANAAHVSGLIIGLLMAF. Ser-202 acts as the Nucleophile in catalysis. The active site involves His-255.

This sequence belongs to the peptidase S54 family.

The protein resides in the cell inner membrane. The catalysed reaction is Cleaves type-1 transmembrane domains using a catalytic dyad composed of serine and histidine that are contributed by different transmembrane domains.. Its function is as follows. Rhomboid-type serine protease that catalyzes intramembrane proteolysis. In Yersinia pseudotuberculosis serotype I (strain IP32953), this protein is Rhomboid protease GlpG.